The chain runs to 317 residues: Multivesicular body subunit 12B (317 aa).

The interval 1–49 (MRSCFCVRRSRDPPPPQPPPPQRGTDQATMPEVKELSEALPETPMDPIT) is disordered. Positions 13–22 (PPPPQPPPPQ) are enriched in pro residues. One can recognise an MABP domain in the interval 45–191 (MDPITGVGVV…SMGIWYRMGR (147 aa)). Ser99 is subject to Phosphoserine. Phosphothreonine occurs at positions 120, 202, and 203. Residues 193–218 (PRNHDSSQPTTPSQSSASSTPAPNLP) are disordered. A compositionally biased stretch (low complexity) spans 198–214 (SSQPTTPSQSSASSTPA). Ser222 carries the post-translational modification Phosphoserine. In terms of domain architecture, UMA spans 252–301 (MDGVPFMISEKFSCIPESMQPFDLLGITIKSLAEIEKEYEYSFRTEQSAA). The interval 297–317 (EQSAAARLPPSPTRCQQIPQS) is disordered. At Ser307 the chain carries Phosphoserine.

Belongs to the MVB12 family. In terms of assembly, component of the ESCRT-I complex (endosomal sorting complex required for transport I) which consists of TSG101, VPS28, a VPS37 protein (VPS37A to -D) and MVB12A or MVB12B in a 1:1:1:1 stoichiometry. Interacts with TSG101; the association appears to be mediated by the TSG101-VPS37 binary subcomplex. Interacts with VPS28. Interacts with VPS37B; the association appears to be mediated by the TSG101-VPS37 binary subcomplex. Interacts with VPS37C; the association appears to be mediated by the TSG101-VPS37 binary subcomplex.

The protein localises to the endosome. It localises to the late endosome membrane. Component of the ESCRT-I complex, a regulator of vesicular trafficking process. Required for the sorting of endocytic ubiquitinated cargos into multivesicular bodies. The chain is Multivesicular body subunit 12B (Mvb12b) from Mus musculus (Mouse).